The chain runs to 339 residues: 7,8-didemethyl-8-hydroxy-5-deazariboflavin synthase (339 aa).

The Radical SAM core domain maps to 25-256 (ATYSPAYTIV…PDITIQIPPN (232 aa)). Cys39, Cys43, and Cys46 together coordinate [4Fe-4S] cluster.

Belongs to the radical SAM superfamily. CofG family. Consists of two subunits, CofG and CofH. The cofactor is [4Fe-4S] cluster.

It catalyses the reaction 5-amino-5-(4-hydroxybenzyl)-6-(D-ribitylimino)-5,6-dihydrouracil + S-adenosyl-L-methionine = 7,8-didemethyl-8-hydroxy-5-deazariboflavin + 5'-deoxyadenosine + L-methionine + NH4(+) + H(+). It participates in cofactor biosynthesis; coenzyme F0 biosynthesis. Its function is as follows. Catalyzes the radical-mediated synthesis of 7,8-didemethyl-8-hydroxy-5-deazariboflavin from 5-amino-5-(4-hydroxybenzyl)-6-(D-ribitylimino)-5,6-dihydrouracil. This chain is 7,8-didemethyl-8-hydroxy-5-deazariboflavin synthase, found in Nostoc sp. (strain PCC 7120 / SAG 25.82 / UTEX 2576).